A 160-amino-acid chain; its full sequence is Cytochrome b6-f complex subunit 4 (160 aa).

3 helical membrane-spanning segments follow: residues 36–56, 95–115, and 131–151; these read LLYIFPVVILGTIACNVGLAV, LLGVLLMVSVPAGLLTVPFLE, and TVFLIGTAAALWLGIGATLPI.

This sequence belongs to the cytochrome b family. PetD subfamily. In terms of assembly, the 4 large subunits of the cytochrome b6-f complex are cytochrome b6, subunit IV (17 kDa polypeptide, petD), cytochrome f and the Rieske protein, while the 4 small subunits are petG, petL, petM and petN. The complex functions as a dimer.

Its subcellular location is the plastid. The protein localises to the chloroplast thylakoid membrane. In terms of biological role, component of the cytochrome b6-f complex, which mediates electron transfer between photosystem II (PSII) and photosystem I (PSI), cyclic electron flow around PSI, and state transitions. The polypeptide is Cytochrome b6-f complex subunit 4 (Arabidopsis thaliana (Mouse-ear cress)).